Reading from the N-terminus, the 485-residue chain is uncharacterized protein (485 aa).

11 helical membrane-spanning segments follow: residues 79 to 99, 117 to 137, 139 to 159, 170 to 190, 199 to 219, 275 to 295, 313 to 333, 355 to 375, 380 to 400, 421 to 441, and 448 to 468; these read LVTLGATLYTLGILFGNLIFA, VFALLQIPIALSVNLAMFLVF, FFSGLFGSVGLSNGSGSLADL, VIYFTVLSIGPGIAPIISGFI, WEFWILLILSGFNLFWAFLLL, ILICVACTIGSIYGMINLVLI, GLMYISITLGLFSAVFIAMPI, LPMGFIGITLFEIGILLFGWT, IFWFVPTIGSAIMGGGYIMTS, GVKIFQLLFGAIFPLFAESLF, and WGCTLLAFILLACGCSLPILF.

This sequence belongs to the major facilitator superfamily. CAR1 family.

Its subcellular location is the membrane. This is an uncharacterized protein from Schizosaccharomyces pombe (strain 972 / ATCC 24843) (Fission yeast).